We begin with the raw amino-acid sequence, 216 residues long: Imidazole glycerol phosphate synthase subunit HisH (216 aa).

The Glutamine amidotransferase type-1 domain maps to 2-216 (RVAIIDYGSG…LIANFLKWKP (215 aa)). The active-site Nucleophile is Cys88. Active-site residues include His196 and Glu198.

In terms of assembly, heterodimer of HisH and HisF.

The protein resides in the cytoplasm. The enzyme catalyses 5-[(5-phospho-1-deoxy-D-ribulos-1-ylimino)methylamino]-1-(5-phospho-beta-D-ribosyl)imidazole-4-carboxamide + L-glutamine = D-erythro-1-(imidazol-4-yl)glycerol 3-phosphate + 5-amino-1-(5-phospho-beta-D-ribosyl)imidazole-4-carboxamide + L-glutamate + H(+). It carries out the reaction L-glutamine + H2O = L-glutamate + NH4(+). The protein operates within amino-acid biosynthesis; L-histidine biosynthesis; L-histidine from 5-phospho-alpha-D-ribose 1-diphosphate: step 5/9. Its function is as follows. IGPS catalyzes the conversion of PRFAR and glutamine to IGP, AICAR and glutamate. The HisH subunit catalyzes the hydrolysis of glutamine to glutamate and ammonia as part of the synthesis of IGP and AICAR. The resulting ammonia molecule is channeled to the active site of HisF. This chain is Imidazole glycerol phosphate synthase subunit HisH, found in Brucella abortus biovar 1 (strain 9-941).